A 374-amino-acid chain; its full sequence is UDP-N-acetylglucosamine--N-acetylmuramyl-(pentapeptide) pyrophosphoryl-undecaprenol N-acetylglucosamine transferase (374 aa).

UDP-N-acetyl-alpha-D-glucosamine is bound by residues 13-15, N124, R165, S193, and Q294; that span reads TGG.

The protein belongs to the glycosyltransferase 28 family. MurG subfamily.

It localises to the cell inner membrane. It carries out the reaction di-trans,octa-cis-undecaprenyl diphospho-N-acetyl-alpha-D-muramoyl-L-alanyl-D-glutamyl-meso-2,6-diaminopimeloyl-D-alanyl-D-alanine + UDP-N-acetyl-alpha-D-glucosamine = di-trans,octa-cis-undecaprenyl diphospho-[N-acetyl-alpha-D-glucosaminyl-(1-&gt;4)]-N-acetyl-alpha-D-muramoyl-L-alanyl-D-glutamyl-meso-2,6-diaminopimeloyl-D-alanyl-D-alanine + UDP + H(+). Its pathway is cell wall biogenesis; peptidoglycan biosynthesis. In terms of biological role, cell wall formation. Catalyzes the transfer of a GlcNAc subunit on undecaprenyl-pyrophosphoryl-MurNAc-pentapeptide (lipid intermediate I) to form undecaprenyl-pyrophosphoryl-MurNAc-(pentapeptide)GlcNAc (lipid intermediate II). This Rhizobium etli (strain CIAT 652) protein is UDP-N-acetylglucosamine--N-acetylmuramyl-(pentapeptide) pyrophosphoryl-undecaprenol N-acetylglucosamine transferase.